The chain runs to 421 residues: C4-dicarboxylate transport protein (421 aa).

The next 8 helical transmembrane spans lie at 9–29 (VQVI…PDVG), 39–59 (FINA…VLGI), 76–96 (FIYF…VVNI), 145–165 (GDIL…AALG), 185–205 (IIGY…AYTI), 219–239 (LMMS…NIIC), 316–336 (VFGV…LMLT), and 348–368 (FIVL…GLAL).

Belongs to the dicarboxylate/amino acid:cation symporter (DAACS) (TC 2.A.23) family.

It localises to the cell membrane. In terms of biological role, responsible for the transport of succinate and fumarate, but not malate, across the membrane. The polypeptide is C4-dicarboxylate transport protein (dctA) (Bacillus subtilis (strain 168)).